A 244-amino-acid chain; its full sequence is ATP synthase subunit O, mitochondrial (244 aa).

The transit peptide at 1 to 45 (MAMTGRARSMGFSILQKALSSAQRSNAHRSILCPTLSNSELLRNY) directs the protein to the mitochondrion.

It belongs to the ATPase delta chain family. F-type ATPases have 2 components, CF(1) - the catalytic core - and CF(0) - the membrane proton channel. CF(1) has five subunits: alpha(3), beta(3), gamma(1), delta(1), epsilon(1). CF(0) has three main subunits: a, b and c.

The protein localises to the mitochondrion. Its subcellular location is the mitochondrion inner membrane. Its function is as follows. Mitochondrial membrane ATP synthase (F(1)F(0) ATP synthase or Complex V) produces ATP from ADP in the presence of a proton gradient across the membrane which is generated by electron transport complexes of the respiratory chain. F-type ATPases consist of two structural domains, F(1) - containing the extramembraneous catalytic core and F(0) - containing the membrane proton channel, linked together by a central stalk and a peripheral stalk. During catalysis, ATP synthesis in the catalytic domain of F(1) is coupled via a rotary mechanism of the central stalk subunits to proton translocation. Part of the complex F(0) domain and the peripheric stalk, which acts as a stator to hold the catalytic alpha(3)beta(3) subcomplex and subunit a/ATP6 static relative to the rotary elements. This Ipomoea batatas (Sweet potato) protein is ATP synthase subunit O, mitochondrial.